We begin with the raw amino-acid sequence, 417 residues long: MLLPVPLLLGLLGLAAADPTVYFKEQFLDGDGWTERWIESKHKPDFGKFVLSSGKFYGDQEKDKGLQTSQDARFYALSARFEPFSNKGQTLVVQFTVKHEQNIDCGGGYVKLFPAGLDQTDMHGDSEYNIMFGPDICGPGTKKVHVIFNYKGKNVLINKDIRCKDDEFTHLYTLIVRPNNTYEVKIDNSQVESGSLEDDWDFLPPKKIKDPDAAKPEDWDDRAKIDDPTDSKPEDWDKPEHIPDPDAKKPEDWDEEMDGEWEPPVIQNPEYKGEWKPRQIDNPEYKGIWIHPEIDNPEYSPDSNIYAYENFAVLGLDLWQVKSGTIFDNFLITNDEAYAEEFGNETWGVTKAAEKQMKDKQDEEQRLHEEEEEKKGKEEEEADKDDDEDKDEDEEDEDEKEEEEEEDAAAGQAKDEL.

Residues 1-17 (MLLPVPLLLGLLGLAAA) form the signal peptide. The N-domain stretch occupies residues 18–197 (DPTVYFKEQF…NSQVESGSLE (180 aa)). Position 26 (Gln-26) interacts with Ca(2+). Lys-48 carries the post-translational modification N6-acetyllysine. Ca(2+)-binding residues include Lys-62 and Lys-64. An N6-(2-hydroxyisobutyryl)lysine modification is found at Lys-64. Residues Tyr-109, Lys-111, Tyr-128, and Asp-135 each coordinate an alpha-D-glucoside. Cysteines 137 and 163 form a disulfide. Lys-159 is subject to N6-acetyllysine. N-linked (GlcNAc...) asparagine glycosylation is present at Asn-179. Residues 191–202 (VESGSLEDDWDF) form a 1-1 repeat. A 4 X approximate repeats region spans residues 191–255 (VESGSLEDDW…DAKKPEDWDE (65 aa)). The segment at 193-270 (SGSLEDDWDF…WEPPVIQNPE (78 aa)) is disordered. Residues 198–308 (DDWDFLPPKK…YSPDSNIYAY (111 aa)) are P-domain. Residues 207-251 (KIKDPDAAKPEDWDDRAKIDDPTDSKPEDWDKPEHIPDPDAKKPE) show a composition bias toward basic and acidic residues. An N6-acetyllysine modification is found at Lys-209. 6 consecutive repeat copies span residues 210–221 (DPDAAKPEDWDD), 227–238 (DPTDSKPEDWDK), 244–255 (DPDAKKPEDWDE), 259–269 (GEWEPPVIQNP), 273–283 (GEWKPRQIDNP), and 287–297 (GIWIHPEIDNP). Residues 237 to 270 (DKPEHIPDPDAKKPEDWDEEMDGEWEPPVIQNPE) are interaction with PPIB. Over residues 252–261 (DWDEEMDGEW) the composition is skewed to acidic residues. The segment at 259–297 (GEWEPPVIQNPEYKGEWKPRQIDNPEYKGIWIHPEIDNP) is 3 X approximate repeats. Residues 309–417 (ENFAVLGLDL…AAAGQAKDEL (109 aa)) are C-domain. Residue Asp-317 coordinates an alpha-D-glucoside. Asp-328 serves as a coordination point for Ca(2+). The segment at 350 to 417 (TKAAEKQMKD…AAAGQAKDEL (68 aa)) is disordered. The segment covering 352–378 (AAEKQMKDKQDEEQRLHEEEEEKKGKE) has biased composition (basic and acidic residues). The segment covering 379 to 408 (EEEADKDDDEDKDEDEEDEDEKEEEEEEDA) has biased composition (acidic residues). A Prevents secretion from ER motif is present at residues 414–417 (KDEL).

The protein belongs to the calreticulin family. Monomer. Component of an EIF2 complex at least composed of CELF1/CUGBP1, CALR, CALR3, EIF2S1, EIF2S2, HSP90B1 and HSPA5. Interacts with PDIA3/ERp57 and SPACA9. Interacts with TRIM21. Interacts with NR3C1. Interacts with PPIB. Interacts (via P-domain) with PDIA5. Interacts with GABARAP. Interacts with CLCC1.

Its subcellular location is the endoplasmic reticulum lumen. It is found in the cytoplasm. It localises to the cytosol. The protein localises to the secreted. The protein resides in the extracellular space. Its subcellular location is the extracellular matrix. It is found in the cell surface. It localises to the sarcoplasmic reticulum lumen. The protein localises to the cytoplasmic vesicle. The protein resides in the secretory vesicle. Its subcellular location is the cortical granule. It is found in the cytolytic granule. Calcium-binding chaperone that promotes folding, oligomeric assembly and quality control in the endoplasmic reticulum (ER) via the calreticulin/calnexin cycle. This lectin interacts transiently with almost all of the monoglucosylated glycoproteins that are synthesized in the ER. Interacts with the DNA-binding domain of NR3C1 and mediates its nuclear export. Involved in maternal gene expression regulation. May participate in oocyte maturation via the regulation of calcium homeostasis. Present in the cortical granules of non-activated oocytes, is exocytosed during the cortical reaction in response to oocyte activation and might participate in the block to polyspermy. The sequence is that of Calreticulin (CALR) from Bos taurus (Bovine).